Here is a 319-residue protein sequence, read N- to C-terminus: HTH-type transcriptional regulator YidZ (319 aa).

Residues Leu-8–Thr-65 form the HTH lysR-type domain. A DNA-binding region (H-T-H motif) is located at residues Val-25–Ala-44.

It belongs to the LysR transcriptional regulatory family.

In terms of biological role, involved in anaerobic NO protection. The protein is HTH-type transcriptional regulator YidZ of Escherichia coli O157:H7 (strain EC4115 / EHEC).